Here is a 122-residue protein sequence, read N- to C-terminus: Large ribosomal subunit protein uL14 (122 aa).

Belongs to the universal ribosomal protein uL14 family. Part of the 50S ribosomal subunit. Forms a cluster with proteins L3 and L19. In the 70S ribosome, L14 and L19 interact and together make contacts with the 16S rRNA in bridges B5 and B8.

Its function is as follows. Binds to 23S rRNA. Forms part of two intersubunit bridges in the 70S ribosome. The sequence is that of Large ribosomal subunit protein uL14 from Gloeothece citriformis (strain PCC 7424) (Cyanothece sp. (strain PCC 7424)).